A 187-amino-acid polypeptide reads, in one-letter code: Capsid protein (187 aa).

Residues 151-180 (RRGSARVVRSPRRRTPSPRRRRSQSPRRRP) are compositionally biased toward basic residues. Positions 151–187 (RRGSARVVRSPRRRTPSPRRRRSQSPRRRPQSPASNC) are disordered. 3 positions are modified to phosphoserine; by host: S160, S167, and S175. A run of 3 repeats spans residues 160–164 (SPRRR), 167–171 (SPRRR), and 175–179 (SPRRR). The segment at 160 to 179 (SPRRRTPSPRRRRSQSPRRR) is 3 X 5 AA repeats of S-P-R-R-R. The Bipartite nuclear localization signal motif lies at 163–180 (RRTPSPRRRRSQSPRRRP). The tract at residues 181–187 (QSPASNC) is RNA binding.

It belongs to the orthohepadnavirus core antigen family. Homodimerizes, then multimerizes. Interacts with cytosol exposed regions of viral L glycoprotein present in the reticulum-to-Golgi compartment. Interacts with human FLNB. Phosphorylated form interacts with host importin alpha; this interaction depends on the exposure of the NLS, which itself depends upon genome maturation and/or phosphorylation of the capsid protein. Interacts with host NUP153. Post-translationally, phosphorylated by host SRPK1, SRPK2, and maybe protein kinase C or GAPDH. Phosphorylation is critical for pregenomic RNA packaging. Protein kinase C phosphorylation is stimulated by HBx protein and may play a role in transport of the viral genome to the nucleus at the late step during the viral replication cycle.

The protein localises to the virion. It localises to the host cytoplasm. Functionally, self assembles to form an icosahedral capsid. Most capsids appear to be large particles with an icosahedral symmetry of T=4 and consist of 240 copies of capsid protein, though a fraction forms smaller T=3 particles consisting of 180 capsid proteins. Entering capsids are transported along microtubules to the nucleus. Phosphorylation of the capsid is thought to induce exposure of nuclear localization signal in the C-terminal portion of the capsid protein that allows binding to the nuclear pore complex via the importin (karyopherin-) alpha and beta. Capsids are imported in intact form through the nuclear pore into the nuclear basket, where it probably binds NUP153. Only capsids that contain the mature viral genome can release the viral DNA and capsid protein into the nucleoplasm. Immature capsids get stuck in the basket. Capsids encapsulate the pre-genomic RNA and the P protein. Pre-genomic RNA is reverse-transcribed into DNA while the capsid is still in the cytoplasm. The capsid can then either be directed to the nucleus, providing more genomes for transcription, or bud through the endoplasmic reticulum to provide new virions. The polypeptide is Capsid protein (Urocitellus parryii kennicottii (ASHV)).